We begin with the raw amino-acid sequence, 115 residues long: Meiotically up-regulated gene 168 protein (115 aa).

The disordered stretch occupies residues 82–115 (SVSPVHTKAEEPGLGLTPMNSADFSNKIASRYRS). Positions 99–109 (PMNSADFSNKI) are enriched in polar residues.

The protein resides in the nucleus. Its function is as follows. Has a role in meiosis. This chain is Meiotically up-regulated gene 168 protein (mug168), found in Schizosaccharomyces pombe (strain 972 / ATCC 24843) (Fission yeast).